We begin with the raw amino-acid sequence, 86 residues long: Anti-adapter protein IraP (86 aa).

The stretch at 1-42 (MKNLIAELLVKLAQKEEESKELVAQVEALEIVVTALLRQMAQ) forms a coiled coil.

The protein belongs to the IraP family. As to quaternary structure, interacts with RssB.

It is found in the cytoplasm. Functionally, inhibits RpoS proteolysis by regulating RssB activity, thereby increasing the stability of the sigma stress factor RpoS especially during phosphate starvation, but also in stationary phase and during nitrogen starvation. Its effect on RpoS stability is due to its interaction with RssB, which probably blocks the interaction of RssB with RpoS, and the consequent delivery of the RssB-RpoS complex to the ClpXP protein degradation pathway. This is Anti-adapter protein IraP from Enterobacter sp. (strain 638).